A 308-amino-acid chain; its full sequence is Homogentisate phytyltransferase (308 aa).

8 consecutive transmembrane segments (helical) span residues 13 to 33, 44 to 64, 104 to 124, 142 to 162, 173 to 193, 219 to 241, 245 to 263, and 279 to 299; these read PHTI…TILG, LDLV…IVGL, LAIA…SLII, AALC…FLFF, ITPI…IAIF, VFRG…GLWA, LNTA…LLWW, and FYQF…LALW.

Belongs to the UbiA prenyltransferase family.

The protein localises to the membrane. It catalyses the reaction phytyl diphosphate + homogentisate + H(+) = 2-methyl-6-phytyl-1,4-benzene-1,4-diol + CO2 + diphosphate. Its pathway is cofactor biosynthesis; tocopherol biosynthesis. Involved in the synthesis of tocopherol (vitamin E). Catalyzes the condensation of homogentisate and phytyl diphosphate to form dimethylphytylhydrquinone. This chain is Homogentisate phytyltransferase, found in Synechocystis sp. (strain ATCC 27184 / PCC 6803 / Kazusa).